Consider the following 211-residue polypeptide: Ion-translocating oxidoreductase complex subunit G (211 aa).

Residues 9-29 (GLTLAIFACATTGLVAMTQYL) traverse the membrane as a helical segment. Thr175 is modified (FMN phosphoryl threonine).

The protein belongs to the RnfG family. As to quaternary structure, the complex is composed of six subunits: RnfA, RnfB, RnfC, RnfD, RnfE and RnfG. FMN is required as a cofactor.

It is found in the cell inner membrane. Functionally, part of a membrane-bound complex that couples electron transfer with translocation of ions across the membrane. In Vibrio vulnificus (strain YJ016), this protein is Ion-translocating oxidoreductase complex subunit G.